Here is a 356-residue protein sequence, read N- to C-terminus: Chavicol O-methyltransferase (356 aa).

Residues G202, D225, D245, M246, and K259 each coordinate S-adenosyl-L-methionine. H263 (proton acceptor) is an active-site residue.

This sequence belongs to the class I-like SAM-binding methyltransferase superfamily. Cation-independent O-methyltransferase family. COMT subfamily. Homodimer. In terms of tissue distribution, specifically expressed in the peltate glandular trichomes on the surface of the young basil leaves.

It carries out the reaction (E)-isoeugenol + S-adenosyl-L-methionine = (E)-isomethyleugenol + S-adenosyl-L-homocysteine + H(+). Its pathway is aromatic compound metabolism; phenylpropanoid biosynthesis. Its function is as follows. Phenylpropene O-methyltransferase that catalyzes the methylation of the para-4-hydroxyl of chavicol to methylchavicol. Can also convert eugenol to methyleugenol but with less affinity. The sequence is that of Chavicol O-methyltransferase (CVOMT1) from Ocimum basilicum (Sweet basil).